Reading from the N-terminus, the 331-residue chain is D-lactate dehydrogenase (331 aa).

NAD(+) contacts are provided by residues 155 to 156, aspartate 175, 206 to 207, asparagine 212, 233 to 235, and aspartate 259; these read HI, VP, and AAR. Arginine 235 is a catalytic residue. The active site involves glutamate 264. Histidine 296 (proton donor) is an active-site residue.

Belongs to the D-isomer specific 2-hydroxyacid dehydrogenase family. As to quaternary structure, homodimer.

It catalyses the reaction (R)-lactate + NAD(+) = pyruvate + NADH + H(+). In Leuconostoc mesenteroides subsp. cremoris, this protein is D-lactate dehydrogenase.